The primary structure comprises 135 residues: D-ribose pyranase (135 aa).

His-20 (proton donor) is an active-site residue. Residues Asp-28, His-102, and 124 to 126 each bind substrate; that span reads YSN.

Belongs to the RbsD / FucU family. RbsD subfamily. In terms of assembly, homodecamer.

Its subcellular location is the cytoplasm. It carries out the reaction beta-D-ribopyranose = beta-D-ribofuranose. It participates in carbohydrate metabolism; D-ribose degradation; D-ribose 5-phosphate from beta-D-ribopyranose: step 1/2. Its function is as follows. Catalyzes the interconversion of beta-pyran and beta-furan forms of D-ribose. The polypeptide is D-ribose pyranase (Thermotoga petrophila (strain ATCC BAA-488 / DSM 13995 / JCM 10881 / RKU-1)).